Consider the following 1119-residue polypeptide: Period circadian protein homolog 3 (1119 aa).

Residues Met-1–Asn-48 are disordered. The Nuclear export signal 1 motif lies at Leu-54–Lys-63. PAS domains follow at residues Leu-120–Leu-187 and Tyr-259–Lys-325. A PAC domain is found at His-334 to Pro-377. The Nuclear export signal 3 motif lies at Leu-400–Leu-409. Residues Gly-419 to Ser-428 show a composition bias toward low complexity. Disordered regions lie at residues Gly-419–Ala-449, Val-483–Tyr-530, His-718–Ser-744, and Leu-878–Ser-910. Polar residues-rich tracts occupy residues Gln-429–Ser-442 and Thr-491–Thr-515. Residues Leu-551–His-750 are CSNK1E binding domain. The Nuclear localization signal motif lies at Arg-720 to Asp-739. Basic and acidic residues predominate over residues His-885 to Pro-903. Position 907 is a phosphoserine (Ser-907). The Nuclear export signal 2 signature appears at Leu-913 to Glu-920. Residues Gly-947–Ser-1011 form a disordered region. Residues Ser-970–Ser-988 are compositionally biased toward low complexity. Positions Asp-989–Ser-1001 are enriched in polar residues. The interval Glu-1037 to Leu-1119 is CRY binding domain.

As to quaternary structure, homodimer. Component of the circadian core oscillator, which includes the CRY proteins, CLOCK or NPAS2, BMAL1 or BMAL2, CSNK1D and/or CSNK1E, TIMELESS and the PER proteins. Interacts directly with PER1, PER2, CRY1, CRY2, and TIMELESS; interaction with CRY1 and CRY2 is weak and not rhythmic. Interacts with FBXW11 and BTRC. In terms of processing, phosphorylation by CSNK1E is weak and appears to require association with PER1 and translocation to the nucleus. Post-translationally, ubiquitinated.

Its subcellular location is the cytoplasm. The protein resides in the nucleus. Originally described as a core component of the circadian clock. The circadian clock, an internal time-keeping system, regulates various physiological processes through the generation of approximately 24 hour circadian rhythms in gene expression, which are translated into rhythms in metabolism and behavior. It is derived from the Latin roots 'circa' (about) and 'diem' (day) and acts as an important regulator of a wide array of physiological functions including metabolism, sleep, body temperature, blood pressure, endocrine, immune, cardiovascular, and renal function. Consists of two major components: the central clock, residing in the suprachiasmatic nucleus (SCN) of the brain, and the peripheral clocks that are present in nearly every tissue and organ system. Both the central and peripheral clocks can be reset by environmental cues, also known as Zeitgebers (German for 'timegivers'). The predominant Zeitgeber for the central clock is light, which is sensed by retina and signals directly to the SCN. The central clock entrains the peripheral clocks through neuronal and hormonal signals, body temperature and feeding-related cues, aligning all clocks with the external light/dark cycle. Circadian rhythms allow an organism to achieve temporal homeostasis with its environment at the molecular level by regulating gene expression to create a peak of protein expression once every 24 hours to control when a particular physiological process is most active with respect to the solar day. Transcription and translation of core clock components (CLOCK, NPAS2, BMAL1, BMAL2, PER1, PER2, PER3, CRY1 and CRY2) plays a critical role in rhythm generation, whereas delays imposed by post-translational modifications (PTMs) are important for determining the period (tau) of the rhythms (tau refers to the period of a rhythm and is the length, in time, of one complete cycle). A diurnal rhythm is synchronized with the day/night cycle, while the ultradian and infradian rhythms have a period shorter and longer than 24 hours, respectively. Disruptions in the circadian rhythms contribute to the pathology of cardiovascular diseases, cancer, metabolic syndromes and aging. A transcription/translation feedback loop (TTFL) forms the core of the molecular circadian clock mechanism. Transcription factors, CLOCK or NPAS2 and BMAL1 or BMAL2, form the positive limb of the feedback loop, act in the form of a heterodimer and activate the transcription of core clock genes and clock-controlled genes (involved in key metabolic processes), harboring E-box elements (5'-CACGTG-3') within their promoters. The core clock genes: PER1/2/3 and CRY1/2 which are transcriptional repressors form the negative limb of the feedback loop and interact with the CLOCK|NPAS2-BMAL1|BMAL2 heterodimer inhibiting its activity and thereby negatively regulating their own expression. This heterodimer also activates nuclear receptors NR1D1, NR1D2, RORA, RORB and RORG, which form a second feedback loop and which activate and repress BMAL1 transcription, respectively. Has a redundant role with the other PER proteins PER1 and PER2 and is not essential for the circadian rhythms maintenance. In contrast, plays an important role in sleep-wake timing and sleep homeostasis probably through the transcriptional regulation of sleep homeostasis-related genes, without influencing circadian parameters. Can bind heme. The polypeptide is Period circadian protein homolog 3 (Per3) (Rattus norvegicus (Rat)).